We begin with the raw amino-acid sequence, 326 residues long: Cathepsin L-like proteinase (326 aa).

The N-terminal stretch at 1 to 15 (MRLFILAVLTVGVLG) is a signal peptide. A propeptide spans 16–106 (SNDDLWHQWK…HGVPYEANNR (91 aa)) (activation peptide). Residue P109 is modified to 3-hydroxyproline; partial. Intrachain disulfides connect C129–C172, C163–C204, and C262–C311. C132 is an active-site residue. At P196 the chain carries 3-hydroxyproline; partial. Catalysis depends on residues H269 and N289.

The protein belongs to the peptidase C1 family. As to quaternary structure, monomer. Contains cysteine residues involved in intramolecular disulfide bonding.

It is found in the secreted. Strongly inhibited by Antipain, E64 and Leupeptin, and weakly inhibited by iodoacetic acid (IAA) and phenylmethylsulfonyl fluoride (PMSF). Requires the presence of dithiothreitol (DTT) for activity. In terms of biological role, thiol protease. Probably involved in interaction with host tissues. Displays a similar activity to that of papain. Has high activity on Z-Phe-Arg-NHMec, but no activity on Z-Arg-NHMec. In Fasciola hepatica (Liver fluke), this protein is Cathepsin L-like proteinase.